The primary structure comprises 515 residues: Probable multifunctional siroheme biosynthesis protein HemA (515 aa).

NAD(+) contacts are provided by residues 26 to 27 and 47 to 48; these read SL and IR. The glutamyl-tRNA reductase stretch occupies residues 26 to 174; that stretch reads SLDYKSAAID…TAAKKAKTEI (149 aa). Residues 68-71, Ser127, Glu132, and Gln138 contribute to the L-glutamyl-tRNA(Glu) site; that span reads TCNR. Cys69 functions as the Nucleophile in the catalytic mechanism. Position 206–211 (206–211) interacts with NADP(+); the sequence is GNGEIG. The tract at residues 367–507 is precorrin-2 dehydrogenase /sirohydrochlorin ferrochelatase; it reads FPLFIDLSGK…SLVKSVAEQI (141 aa).

This sequence in the N-terminal section; belongs to the glutamyl-tRNA reductase family. It in the C-terminal section; belongs to the precorrin-2 dehydrogenase / sirohydrochlorin ferrochelatase family. In terms of assembly, homodimer.

The enzyme catalyses (S)-4-amino-5-oxopentanoate + tRNA(Glu) + NADP(+) = L-glutamyl-tRNA(Glu) + NADPH + H(+). The catalysed reaction is precorrin-2 + NAD(+) = sirohydrochlorin + NADH + 2 H(+). It carries out the reaction siroheme + 2 H(+) = sirohydrochlorin + Fe(2+). It functions in the pathway cofactor biosynthesis; adenosylcobalamin biosynthesis; sirohydrochlorin from precorrin-2: step 1/1. Its pathway is porphyrin-containing compound metabolism; siroheme biosynthesis; siroheme from sirohydrochlorin: step 1/1. It participates in porphyrin-containing compound metabolism; siroheme biosynthesis; sirohydrochlorin from precorrin-2: step 1/1. The protein operates within porphyrin-containing compound metabolism; protoporphyrin-IX biosynthesis; 5-aminolevulinate from L-glutamyl-tRNA(Glu): step 1/2. In terms of biological role, multifunctional enzyme that catalyzes the NADPH-dependent reduction of glutamyl-tRNA(Glu) to glutamate 1-semialdehyde (GSA), the NAD-dependent ring dehydrogenation of precorrin-2 to sirohydrochlorin and finally, the ferrochelation of sirohydrochlorin to yield siroheme. This chain is Probable multifunctional siroheme biosynthesis protein HemA, found in Ruminiclostridium josui (Clostridium josui).